The primary structure comprises 115 residues: Large ribosomal subunit protein bL19 (115 aa).

It belongs to the bacterial ribosomal protein bL19 family.

This protein is located at the 30S-50S ribosomal subunit interface and may play a role in the structure and function of the aminoacyl-tRNA binding site. The polypeptide is Large ribosomal subunit protein bL19 (Caldanaerobacter subterraneus subsp. tengcongensis (strain DSM 15242 / JCM 11007 / NBRC 100824 / MB4) (Thermoanaerobacter tengcongensis)).